A 339-amino-acid polypeptide reads, in one-letter code: Uroporphyrinogen decarboxylase (339 aa).

Residues 21 to 25, D71, Y147, S202, and H315 each bind substrate; that span reads RQAGR.

Belongs to the uroporphyrinogen decarboxylase family. In terms of assembly, homodimer.

The protein localises to the cytoplasm. It carries out the reaction uroporphyrinogen III + 4 H(+) = coproporphyrinogen III + 4 CO2. It functions in the pathway porphyrin-containing compound metabolism; protoporphyrin-IX biosynthesis; coproporphyrinogen-III from 5-aminolevulinate: step 4/4. Functionally, catalyzes the decarboxylation of four acetate groups of uroporphyrinogen-III to yield coproporphyrinogen-III. In Helicobacter pylori (strain P12), this protein is Uroporphyrinogen decarboxylase.